Consider the following 380-residue polypeptide: Cytochrome b (380 aa).

4 consecutive transmembrane segments (helical) span residues 34–54 (FGSL…LLAM), 78–99 (WLIR…FLHI), 114–134 (WNTG…GYVL), and 179–199 (FFAL…IHLT). Positions 84 and 98 each coordinate heme b. Heme b-binding residues include His-183 and His-197. His-202 lines the a ubiquinone pocket. The next 4 membrane-spanning stretches (helical) occupy residues 227 to 247 (IKDI…ALFS), 289 to 309 (LGGV…PFLH), 321 to 341 (LSQT…WIGS), and 348 to 368 (FIII…ILFP).

The protein belongs to the cytochrome b family. In terms of assembly, the cytochrome bc1 complex contains 11 subunits: 3 respiratory subunits (MT-CYB, CYC1 and UQCRFS1), 2 core proteins (UQCRC1 and UQCRC2) and 6 low-molecular weight proteins (UQCRH/QCR6, UQCRB/QCR7, UQCRQ/QCR8, UQCR10/QCR9, UQCR11/QCR10 and a cleavage product of UQCRFS1). This cytochrome bc1 complex then forms a dimer. The cofactor is heme b.

It is found in the mitochondrion inner membrane. Component of the ubiquinol-cytochrome c reductase complex (complex III or cytochrome b-c1 complex) that is part of the mitochondrial respiratory chain. The b-c1 complex mediates electron transfer from ubiquinol to cytochrome c. Contributes to the generation of a proton gradient across the mitochondrial membrane that is then used for ATP synthesis. This chain is Cytochrome b (MT-CYB), found in Alectoris chukar (Chukar partridge).